The primary structure comprises 382 residues: SPRY domain-containing protein C285.10c (382 aa).

The chain crosses the membrane as a helical span at residues 21–41; sequence LAILFIFIALAAVIVLLICLL. The 206-residue stretch at 79-284 folds into the B30.2/SPRY domain; sequence GFSLLDDMGK…LHVNLGQAGY (206 aa). The interval 304–382 is disordered; it reads APPPSYSTSQ…MHSMPATDEV (79 aa). 2 stretches are compositionally biased toward polar residues: residues 309 to 334 and 361 to 372; these read YSTS…QGDT and FSPSSSNNQAYQ.

It localises to the cytoplasm. Its subcellular location is the membrane. This chain is SPRY domain-containing protein C285.10c, found in Schizosaccharomyces pombe (strain 972 / ATCC 24843) (Fission yeast).